The chain runs to 152 residues: Large ribosomal subunit protein uL22 (152 aa).

It belongs to the universal ribosomal protein uL22 family. As to quaternary structure, part of the 50S ribosomal subunit.

Functionally, this protein binds specifically to 23S rRNA. It makes multiple contacts with different domains of the 23S rRNA in the assembled 50S subunit and ribosome. In terms of biological role, the globular domain of the protein is located near the polypeptide exit tunnel on the outside of the subunit, while an extended beta-hairpin is found that lines the wall of the exit tunnel in the center of the 70S ribosome. The protein is Large ribosomal subunit protein uL22 of Cenarchaeum symbiosum (strain A).